The chain runs to 297 residues: MKSSQTLVYSIPRNVEKDTCAAAIKAYQYLISPPPSPIPNDKVASTVDVPKCSTIPESPKDSIVEPKPTATPVAQLHSKVYDLYRDSPKIWLRRERQWLQRHSPAYRFSTPAAKRPRRQPSSFLDVHASNTRKRGSPDTPDSGHSTPHSKGDVHPGMPQHNTRFKQSSREFSSNTQAIDVANTPYELLPDYSPDMSVLDKRSHPRPLRSEWKGPPLDLSNDENRHLLHPAELQLAATLRLPCLVYLDNKRRIFAEWHNRRTQGLSFRKTDAQRASRVDVNKASRLWKAFHDEGFFDD.

2 disordered regions span residues 50-70 (PKCS…KPTA) and 109-173 (STPA…EFSS). The span at 159–173 (QHNTRFKQSSREFSS) shows a compositional bias: polar residues. The 91-residue stretch at 207–297 (LRSEWKGPPL…AFHDEGFFDD (91 aa)) folds into the SWIRM domain.

As to quaternary structure, component of the RPD3C(L) complex.

The protein localises to the nucleus. Component of the RPD3C(L) histone deacetylase complex (HDAC) responsible for the deacetylation of lysine residues on the N-terminal part of the core histones (H2A, H2B, H3 and H4). Histone deacetylation gives a tag for epigenetic repression and plays an important role in transcriptional regulation, cell cycle progression and developmental events. The polypeptide is SWIRM domain-containing protein laf1 (laf1) (Schizosaccharomyces pombe (strain 972 / ATCC 24843) (Fission yeast)).